A 91-amino-acid chain; its full sequence is MFQKQERIGLVVYLYYNRDARKLSKFGDLYYHSKRSRYLIVYINKNDLDTKLEEMRRLKCVKDIRPSAFDDIDRQFVGNLHRDETNNHQKG.

The protein belongs to the UPF0298 family.

The protein resides in the cytoplasm. The protein is UPF0298 protein M28_Spy0318 of Streptococcus pyogenes serotype M28 (strain MGAS6180).